Consider the following 764-residue polypeptide: Protein Lines homolog 1 (764 aa).

Disordered regions lie at residues 615–668 (SQSQ…TSLC) and 682–702 (WEEQ…SSPF). Acidic residues predominate over residues 645 to 654 (DSSEASEEET). The residue at position 650 (Ser-650) is a Phosphoserine. The segment covering 658–668 (HLANSKQTSLC) has biased composition (polar residues). The segment covering 691–702 (EPLLSAESSSPF) has biased composition (low complexity).

It belongs to the protein lines family.

In Mus musculus (Mouse), this protein is Protein Lines homolog 1.